The chain runs to 319 residues: Beta-ketoacyl-[acyl-carrier-protein] synthase III (319 aa).

Active-site residues include Cys-113 and His-246. The tract at residues 247-251 is ACP-binding; it reads QANRR. Asn-276 is a catalytic residue.

Belongs to the thiolase-like superfamily. FabH family. As to quaternary structure, homodimer.

It is found in the cytoplasm. The catalysed reaction is malonyl-[ACP] + acetyl-CoA + H(+) = 3-oxobutanoyl-[ACP] + CO2 + CoA. Its pathway is lipid metabolism; fatty acid biosynthesis. Catalyzes the condensation reaction of fatty acid synthesis by the addition to an acyl acceptor of two carbons from malonyl-ACP. Catalyzes the first condensation reaction which initiates fatty acid synthesis and may therefore play a role in governing the total rate of fatty acid production. Possesses both acetoacetyl-ACP synthase and acetyl transacylase activities. Its substrate specificity determines the biosynthesis of branched-chain and/or straight-chain of fatty acids. The polypeptide is Beta-ketoacyl-[acyl-carrier-protein] synthase III (Rhizorhabdus wittichii (strain DSM 6014 / CCUG 31198 / JCM 15750 / NBRC 105917 / EY 4224 / RW1) (Sphingomonas wittichii)).